The primary structure comprises 231 residues: tRNA (guanine-N(1)-)-methyltransferase (231 aa).

S-adenosyl-L-methionine is bound by residues Gly-112 and 132–137 (LGDFVL).

Belongs to the RNA methyltransferase TrmD family. In terms of assembly, homodimer.

It localises to the cytoplasm. The enzyme catalyses guanosine(37) in tRNA + S-adenosyl-L-methionine = N(1)-methylguanosine(37) in tRNA + S-adenosyl-L-homocysteine + H(+). Functionally, specifically methylates guanosine-37 in various tRNAs. The sequence is that of tRNA (guanine-N(1)-)-methyltransferase from Microcystis aeruginosa (strain NIES-843 / IAM M-2473).